A 344-amino-acid chain; its full sequence is tRNA N6-adenosine threonylcarbamoyltransferase (344 aa).

Positions 119 and 123 each coordinate Fe cation. Residues 141 to 145 (VVSGG), Asp174, Gly187, Asp191, and Asn280 each bind substrate. Asp310 is a binding site for Fe cation.

Belongs to the KAE1 / TsaD family. Fe(2+) serves as cofactor.

It is found in the cytoplasm. It catalyses the reaction L-threonylcarbamoyladenylate + adenosine(37) in tRNA = N(6)-L-threonylcarbamoyladenosine(37) in tRNA + AMP + H(+). Functionally, required for the formation of a threonylcarbamoyl group on adenosine at position 37 (t(6)A37) in tRNAs that read codons beginning with adenine. Is involved in the transfer of the threonylcarbamoyl moiety of threonylcarbamoyl-AMP (TC-AMP) to the N6 group of A37, together with TsaE and TsaB. TsaD likely plays a direct catalytic role in this reaction. This chain is tRNA N6-adenosine threonylcarbamoyltransferase, found in Listeria monocytogenes serotype 4b (strain CLIP80459).